A 564-amino-acid chain; its full sequence is Alpha-farnesene synthase (564 aa).

Mg(2+)-binding residues include D313, D317, T464, and E468. Positions 313-317 (DDVYD) match the DDXXD motif motif.

It belongs to the terpene synthase family. The cofactor is Mg(2+).

The catalysed reaction is (2E,6E)-farnesyl diphosphate = (3E,6E)-alpha-farnesene + diphosphate. Functionally, catalyzes the cyclization of farnesyl diphosphate to (E,E)-alpha-farnesene. The chain is Alpha-farnesene synthase (TPS7) from Ricinus communis (Castor bean).